Reading from the N-terminus, the 486-residue chain is Coronin-1B (486 aa).

S2 is modified (phosphoserine; by PKC). WD repeat units follow at residues 80 to 120 (GHTG…LTSP), 130 to 170 (GHTK…ELYR), 174 to 213 (LHPD…LVAE), 217 to 260 (AHEG…EPMA), and 265 to 305 (DSSN…PYIH). The interval 404 to 444 (LKVSRRNVLSDSRPTSAARPAAPAPAAPAPAAAASSSLSGA) is disordered. Residues 432 to 444 (APAAAASSSLSGA) are compositionally biased toward low complexity. Residues 446-484 (EAGKLEEVMRELRALRALVKEQGERIGRLEEQLGRVENG) adopt a coiled-coil conformation.

This sequence belongs to the WD repeat coronin family. As to quaternary structure, forms homooligomers, but does not form complexes with the other coronins. Interacts with Arp2/3 complex components, including ACTR2, ARPC1B and ARPC2. Binds actin. Post-translationally, phosphorylated in vivo by PKC in response to cholinergic stimulation. Phosphorylation on Ser-2 regulates the interaction with the Arp2/3 complex and cell motility in fibroblasts. Phosphorylation does not seem to affect subcellular location.

The protein resides in the cytoplasm. It localises to the cytoskeleton. The protein localises to the stress fiber. Regulates leading edge dynamics and cell motility in fibroblasts. May be involved in cytokinesis and signal transduction. In Oryctolagus cuniculus (Rabbit), this protein is Coronin-1B (CORO1B).